The chain runs to 380 residues: Outer membrane protein 40 (380 aa).

A signal peptide spans 1-21; sequence MKAKSLLLALAGLACTFSATA. Pyrrolidone carboxylic acid is present on Gln-22. In terms of domain architecture, OmpA-like spans 270–380; that stretch reads PTVTRVVVDN…NRIVVMTAAE (111 aa).

It belongs to the outer membrane OOP (TC 1.B.6) superfamily. In terms of assembly, disulfide-linked heterodimer with Omp41.

The protein localises to the cell outer membrane. Functionally, may have porin activity and function in peptidoglycan binding. This is Outer membrane protein 40 from Porphyromonas gingivalis (strain ATCC BAA-308 / W83).